The sequence spans 714 residues: Mitochondrial division protein 1 (714 aa).

A coiled-coil region spans residues 240–298 (LNIQKNSTLSEIRDIEVEVENLRQKKEKLLGKIANIEQNQLLLEDNLKQIDDRLDFLEE). The interval 323 to 354 (LKNDAIRNEGVTTESISSEASNLPPRRRQQLR) is disordered. Residues 332-343 (GVTTESISSEAS) show a composition bias toward polar residues. Position 376 is a phosphoserine (serine 376). WD repeat units lie at residues 396–436 (THDD…KIGE), 439–478 (GHLA…QLYQ), 500–539 (AHTD…QTID), 561–603 (TQRN…RTLK), 604–642 (GHTD…NKFH), 644–681 (YSAP…SWSC), and 685–714 (GNET…IWAV).

It belongs to the WD repeat MDV1/CAF4 family. In terms of assembly, interacts with CAF4, DNM1 and FIS1, components of the mitochondrial fission machinery. Interacts via its N-terminal, coiled-coil extension (NTE) with FIS1, and via its WD repeats with DNM1.

The protein localises to the mitochondrion outer membrane. Its function is as follows. Involved in mitochondrial fission. Has a partially redundant function to CAF4 in acting as an adapter protein, binding to FIS1 on the mitochondrial outer membrane and recruiting the dynamin-like GTPase DNM1 to form mitochondrial fission complexes. Formation of these complexes is required to promote constriction and fission of the mitochondrial compartment at a late step in mitochondrial division. The sequence is that of Mitochondrial division protein 1 (MDV1) from Saccharomyces cerevisiae (strain YJM789) (Baker's yeast).